The following is an 817-amino-acid chain: DNA gyrase subunit A (817 aa).

The region spanning Leu39–Leu505 is the Topo IIA-type catalytic domain. The active-site O-(5'-phospho-DNA)-tyrosine intermediate is the Tyr127. Residues Gln532–Gly538 carry the GyrA-box motif.

The protein belongs to the type II topoisomerase GyrA/ParC subunit family. Heterotetramer, composed of two GyrA and two GyrB chains. In the heterotetramer, GyrA contains the active site tyrosine that forms a transient covalent intermediate with DNA, while GyrB binds cofactors and catalyzes ATP hydrolysis.

It is found in the cytoplasm. It catalyses the reaction ATP-dependent breakage, passage and rejoining of double-stranded DNA.. In terms of biological role, a type II topoisomerase that negatively supercoils closed circular double-stranded (ds) DNA in an ATP-dependent manner to modulate DNA topology and maintain chromosomes in an underwound state. Negative supercoiling favors strand separation, and DNA replication, transcription, recombination and repair, all of which involve strand separation. Also able to catalyze the interconversion of other topological isomers of dsDNA rings, including catenanes and knotted rings. Type II topoisomerases break and join 2 DNA strands simultaneously in an ATP-dependent manner. The chain is DNA gyrase subunit A from Aminobacterium colombiense (strain DSM 12261 / ALA-1).